Consider the following 331-residue polypeptide: ATPase GET3 (331 aa).

32–39 contributes to the ATP binding site; the sequence is KGGVGKTT. Residue Asp61 is part of the active site. Residues Glu235 and Asn262 each coordinate ATP. Residues Cys273 and Cys276 each coordinate Zn(2+).

The protein belongs to the arsA ATPase family. Homodimer.

Its subcellular location is the cytoplasm. It localises to the endoplasmic reticulum. In terms of biological role, ATPase required for the post-translational delivery of tail-anchored (TA) proteins to the endoplasmic reticulum. Recognizes and selectively binds the transmembrane domain of TA proteins in the cytosol. This complex then targets to the endoplasmic reticulum by membrane-bound receptors, where the tail-anchored protein is released for insertion. This process is regulated by ATP binding and hydrolysis. ATP binding drives the homodimer towards the closed dimer state, facilitating recognition of newly synthesized TA membrane proteins. ATP hydrolysis is required for insertion. Subsequently, the homodimer reverts towards the open dimer state, lowering its affinity for the membrane-bound receptor, and returning it to the cytosol to initiate a new round of targeting. This chain is ATPase GET3, found in Malassezia globosa (strain ATCC MYA-4612 / CBS 7966) (Dandruff-associated fungus).